A 228-amino-acid chain; its full sequence is Glycerol-3-phosphate acyltransferase (228 aa).

Transmembrane regions (helical) follow at residues 1–21, 56–76, 104–124, 136–156, 161–181, and 183–203; these read MINW…LGAT, VPAL…IALV, MVII…WIGF, ILLA…IVVL, IVSL…FFTG, and PLPY…RHIS.

This sequence belongs to the PlsY family. As to quaternary structure, probably interacts with PlsX.

It is found in the cell inner membrane. The enzyme catalyses an acyl phosphate + sn-glycerol 3-phosphate = a 1-acyl-sn-glycero-3-phosphate + phosphate. It participates in lipid metabolism; phospholipid metabolism. Functionally, catalyzes the transfer of an acyl group from acyl-phosphate (acyl-PO(4)) to glycerol-3-phosphate (G3P) to form lysophosphatidic acid (LPA). This enzyme utilizes acyl-phosphate as fatty acyl donor, but not acyl-CoA or acyl-ACP. The chain is Glycerol-3-phosphate acyltransferase from Trichodesmium erythraeum (strain IMS101).